Consider the following 351-residue polypeptide: Inactive RHOMBOID-like protein 8 (351 aa).

Helical transmembrane passes span 48–68 (TWLVSVFVLLQIVLFAVTMGV), 130–150 (WLHSGLFHLFINLGSLIFVGI), 160–180 (RIAVIYFLSGIMGSLFAVLFV), 183–203 (IPSISSGAAFFGLIGAMLSAL), 216–236 (ALAIIFTIFTVNFLIGFLPFI), 239–259 (FANIGGFISGFLLGFVLLFKP), and 294–314 (IICLLVFCGILAGVLLAACWG).

It belongs to the peptidase S54 family. Expressed in pollen mother cell.

It is found in the golgi apparatus membrane. In terms of biological role, probable inactive rhomboid-type serine protease. Functionally, probably essential for the meiosis stage-specific callose accumulation and pollen exine formation. The protein is Inactive RHOMBOID-like protein 8 of Arabidopsis thaliana (Mouse-ear cress).